Consider the following 430-residue polypeptide: Glutamate-1-semialdehyde 2,1-aminomutase (430 aa).

K267 bears the N6-(pyridoxal phosphate)lysine mark.

It belongs to the class-III pyridoxal-phosphate-dependent aminotransferase family. HemL subfamily. Homodimer. Pyridoxal 5'-phosphate serves as cofactor.

Its subcellular location is the cytoplasm. The enzyme catalyses (S)-4-amino-5-oxopentanoate = 5-aminolevulinate. Its pathway is porphyrin-containing compound metabolism; protoporphyrin-IX biosynthesis; 5-aminolevulinate from L-glutamyl-tRNA(Glu): step 2/2. The sequence is that of Glutamate-1-semialdehyde 2,1-aminomutase from Natranaerobius thermophilus (strain ATCC BAA-1301 / DSM 18059 / JW/NM-WN-LF).